The primary structure comprises 360 residues: NAD(P)H-quinone oxidoreductase subunit 1, chloroplastic (360 aa).

A run of 9 helical transmembrane segments spans residues 27 to 47, 98 to 118, 129 to 149, 165 to 185, 203 to 223, 248 to 268, 269 to 289, 297 to 317, and 340 to 360; these read IWIF…VLVI, FSIG…VIPF, IGIF…LMSG, AAQS…ISLL, FWGW…ISSL, YSGI…LISS, LFVT…ISIL, IFGT…FLFI, and FLLP…LFSL.

It belongs to the complex I subunit 1 family. As to quaternary structure, NDH is composed of at least 16 different subunits, 5 of which are encoded in the nucleus.

It localises to the plastid. The protein resides in the chloroplast thylakoid membrane. The enzyme catalyses a plastoquinone + NADH + (n+1) H(+)(in) = a plastoquinol + NAD(+) + n H(+)(out). It carries out the reaction a plastoquinone + NADPH + (n+1) H(+)(in) = a plastoquinol + NADP(+) + n H(+)(out). Its function is as follows. NDH shuttles electrons from NAD(P)H:plastoquinone, via FMN and iron-sulfur (Fe-S) centers, to quinones in the photosynthetic chain and possibly in a chloroplast respiratory chain. The immediate electron acceptor for the enzyme in this species is believed to be plastoquinone. Couples the redox reaction to proton translocation, and thus conserves the redox energy in a proton gradient. The protein is NAD(P)H-quinone oxidoreductase subunit 1, chloroplastic of Barbarea verna (Land cress).